The following is a 363-amino-acid chain: Class I histocompatibility antigen, Gogo-B*0201 alpha chain (363 aa).

Residues 1-24 (MQVTAPRTLLLLLSAALALTETWA) form the signal peptide. The alpha-1 stretch occupies residues 25–114 (GSHSMRYFHT…LRGYYNQSED (90 aa)). Residues 25-308 (GSHSMRYFHT…EPSSQSTIPI (284 aa)) are Extracellular-facing. N110 carries an N-linked (GlcNAc...) asparagine glycan. Positions 115–206 (GSHTIQRMYG…ENGKETLQRA (92 aa)) are alpha-2. 2 cysteine pairs are disulfide-bonded: C125–C188 and C227–C283. The alpha-3 stretch occupies residues 207–298 (DPPKTHVTHH…GLPEPLTLRW (92 aa)). Residues 209-297 (PKTHVTHHPI…EGLPEPLTLR (89 aa)) form the Ig-like C1-type domain. Positions 299–308 (EPSSQSTIPI) are connecting peptide. The helical transmembrane segment at 309–333 (VGIVAGLAVLVVTVAVVAVVAAVMC) threads the bilayer. Over 334–363 (RRKSSGGKGGSYSQAASSDSAQGSDVSLTA) the chain is Cytoplasmic. A disordered region spans residues 336-363 (KSSGGKGGSYSQAASSDSAQGSDVSLTA). The span at 344–363 (SYSQAASSDSAQGSDVSLTA) shows a compositional bias: low complexity.

This sequence belongs to the MHC class I family. As to quaternary structure, heterodimer of an alpha chain and a beta chain (beta-2-microglobulin).

The protein localises to the membrane. In terms of biological role, involved in the presentation of foreign antigens to the immune system. The protein is Class I histocompatibility antigen, Gogo-B*0201 alpha chain of Gorilla gorilla gorilla (Western lowland gorilla).